Reading from the N-terminus, the 376-residue chain is Zinc finger CCCH domain-containing protein C337.12 (376 aa).

Positions 2–25 (NEQQLLENIASLAGAINQYKNEKE) form a coiled coil. The tract at residues 60–95 (SKSTAASPPYVIPSTSSNADDANKEPEKQSTSDYVS) is disordered. Residues 80–89 (DANKEPEKQS) show a composition bias toward basic and acidic residues. Residues 105-140 (KKNILEHDLQARKANLESYRAKLEKEYKTLAENKIQ) adopt a coiled-coil conformation. C3H1-type zinc fingers lie at residues 202-228 (SPSA…FVHE), 229-256 (PTRK…HELD), 257-283 (PRRI…HIHY), and 284-312 (SENA…HILQ). The disordered stretch occupies residues 347-376 (SKTAGSINPEDSGSEIGSNSLESNLDFISV). Residues 349-369 (TAGSINPEDSGSEIGSNSLES) show a composition bias toward polar residues.

The protein resides in the nucleus. The chain is Zinc finger CCCH domain-containing protein C337.12 from Schizosaccharomyces pombe (strain 972 / ATCC 24843) (Fission yeast).